Here is a 557-residue protein sequence, read N- to C-terminus: Urocanate hydratase (557 aa).

Positions 1 to 20 (MSNPRHNEREVRSPRGDELN) are disordered. Residues 52-53 (GG), Gln-130, 176-178 (GMG), Glu-196, Arg-201, 242-243 (NA), 263-267 (QTSAH), 273-274 (YL), and Tyr-322 contribute to the NAD(+) site. The active site involves Cys-410. Position 492 (Gly-492) interacts with NAD(+).

It belongs to the urocanase family. NAD(+) serves as cofactor.

It localises to the cytoplasm. It catalyses the reaction 4-imidazolone-5-propanoate = trans-urocanate + H2O. It participates in amino-acid degradation; L-histidine degradation into L-glutamate; N-formimidoyl-L-glutamate from L-histidine: step 2/3. Catalyzes the conversion of urocanate to 4-imidazolone-5-propionate. This chain is Urocanate hydratase, found in Brucella suis (strain ATCC 23445 / NCTC 10510).